A 391-amino-acid chain; its full sequence is Aspartic protease 17 (391 aa).

The N-terminal stretch at 1 to 15 (MHLIFLLFLAPFCSA) is a signal peptide. A Peptidase A1 domain is found at 65–385 (YLGNFTVGTP…DIGNARIGFA (321 aa)). An N-linked (GlcNAc...) asparagine glycan is attached at Asn68. Asp83 is a catalytic residue. An N-linked (GlcNAc...) asparagine glycan is attached at Asn108. Residue Asp274 is part of the active site. Cys309 and Cys345 are oxidised to a cystine.

Belongs to the peptidase A1 family. As to expression, expressed in intestinal cells.

It localises to the secreted. In terms of biological role, aspartic proteinase. This chain is Aspartic protease 17, found in Caenorhabditis elegans.